Consider the following 467-residue polypeptide: H(+)/Cl(-) exchange transporter ClcA (467 aa).

Topologically, residues 1–30 are cytoplasmic; that stretch reads MKSQTIPTRRVRGFRRAAVIRQLLSRDKTP. A helical transmembrane segment spans residues 31-67; it reads LTILLLASLTGVLAGLAGVAFEKAVAWVTAHRIEGLA. The Periplasmic portion of the chain corresponds to 68-74; the sequence is QVAHIPW. A helical membrane pass occupies residues 75–98; sequence LVWLLAFLFSALLAMVGYFLVRRF. At 99 to 106 the chain is on the cytoplasmic side; it reads APEAGGSG. Residues 104 to 108 carry the Selectivity filter part_1 motif; it reads GSGIP. Residue Ser-105 coordinates chloride. Residues 107–114 constitute an intramembrane region (helical); the sequence is IPEIEGAL. The Cytoplasmic portion of the chain corresponds to 115–121; it reads EELRPVR. A helical transmembrane segment spans residues 122–139; that stretch reads WWRVLPVKFFGGMGTLGA. Residues 140 to 145 lie on the Periplasmic side of the membrane; it reads GMVLGR. The Selectivity filter part_2 motif lies at 144 to 148; that stretch reads GREGP. A helical membrane pass occupies residues 146-164; the sequence is EGPMVQMGGNIGRMVLDIF. Topologically, residues 165 to 174 are cytoplasmic; that stretch reads HRPDAEARHT. Intramembrane regions (helical) lie at residues 175–187 and 191–199; these read LLAT…LAAA and PLAGILFII. Residues 200 to 212 are Cytoplasmic-facing; sequence EEMRTQFHYNLIS. Residues 213–230 traverse the membrane as a helical segment; sequence IKAVFTGVIMSTIVFRIF. At 231–250 the chain is on the periplasmic side; the sequence is NGEKSVIEVGQLTDAPVYTL. Residues 251–279 form a helical membrane-spanning segment; the sequence is WLYLLLGIIFGAVGPLFNRLVLGMQDVFA. Over 280 to 285 the chain is Cytoplasmic; it reads RIHGGN. A helical transmembrane segment spans residues 286–307; it reads TTRWVLLGGAIGGACGLLALWE. At 308-327 the chain is on the periplasmic side; it reads PAAAGGGFGLIPIAAAGNFT. The chain crosses the membrane as a helical span at residues 328–347; the sequence is VGMLLFIFIARVVTTVFCFS. The Cytoplasmic segment spans residues 348 to 352; sequence SGAPG. Positions 353-357 match the Selectivity filter part_3 motif; that stretch reads GIFAP. A helical transmembrane segment spans residues 353 to 374; it reads GIFAPMLALGTLLGSAFGMACA. Chloride-binding residues include Ile-354 and Phe-355. The Periplasmic segment spans residues 375–384; sequence AWFPQWHLQA. The helical intramembrane region spans 385–399; it reads GTFAIAGMGALLAAS. Residues 400 to 402 constitute an intramembrane region (note=Loop between two helices); that stretch reads VRA. The helical intramembrane region spans 403 to 414; that stretch reads PITGIVLVLEMT. The note=Loop between two helices intramembrane region spans 415–419; it reads DNYQL. The helical transmembrane segment at 420–436 threads the bilayer; the sequence is ILPMIITCLGATLLAQF. The Cytoplasmic portion of the chain corresponds to 437–467; that stretch reads LGGKPLYSTILARTLAKQEAERQAQADGRNT. Position 443 (Tyr-443) interacts with chloride.

The protein belongs to the chloride channel (TC 2.A.49) family. ClcA subfamily. In terms of assembly, homodimer.

It is found in the cell inner membrane. It catalyses the reaction 2 chloride(in) + H(+)(out) = 2 chloride(out) + H(+)(in). In terms of biological role, proton-coupled chloride transporter. Functions as antiport system and exchanges two chloride ions for 1 proton. Probably acts as an electrical shunt for an outwardly-directed proton pump that is linked to amino acid decarboxylation, as part of the extreme acid resistance (XAR) response. The protein is H(+)/Cl(-) exchange transporter ClcA of Cronobacter sakazakii (strain ATCC BAA-894) (Enterobacter sakazakii).